The chain runs to 150 residues: Large ribosomal subunit protein uL15 (150 aa).

The segment at 1–57 is disordered; it reads MTIKLESLQSNKGSRRKKMRKGRGIAAGQGASCGFGMRGQKSRSGRPTRPGFEGGQM. Residues 13–23 are compositionally biased toward basic residues; it reads GSRRKKMRKGR. The span at 25-37 shows a compositional bias: gly residues; the sequence is IAAGQGASCGFGM.

Belongs to the universal ribosomal protein uL15 family. Part of the 50S ribosomal subunit.

Its function is as follows. Binds to the 23S rRNA. This Prochlorococcus marinus (strain NATL1A) protein is Large ribosomal subunit protein uL15.